The primary structure comprises 161 residues: Allophycocyanin alpha-B chain (161 aa).

Position 71 is an N4-methylasparagine (Asn71). Cys81 contacts (2R,3E)-phycocyanobilin.

This sequence belongs to the phycobiliprotein family. Contains one covalently linked bilin chromophore.

The protein resides in the plastid. The protein localises to the chloroplast thylakoid membrane. Allophycocyanin is a photosynthetic bile pigment-protein complex with maximum absorption at approximately 650 nanometers. The protein is Allophycocyanin alpha-B chain (apcD) of Porphyra purpurea (Red seaweed).